A 70-amino-acid chain; its full sequence is Beta-defensin 107 (70 aa).

A signal peptide spans 1–26; sequence MPGAMKIFVFILAALILLAQIFQART. Disulfide bonds link C41–C55 and C45–C64.

It belongs to the beta-defensin family. As to expression, specifically expressed in testis.

The protein resides in the secreted. In terms of biological role, has antibacterial activity. The sequence is that of Beta-defensin 107 (DEFB107A) from Homo sapiens (Human).